The chain runs to 532 residues: Glutamate--cysteine ligase (532 aa).

This sequence belongs to the glutamate--cysteine ligase type 1 family. Type 1 subfamily.

The enzyme catalyses L-cysteine + L-glutamate + ATP = gamma-L-glutamyl-L-cysteine + ADP + phosphate + H(+). Its pathway is sulfur metabolism; glutathione biosynthesis; glutathione from L-cysteine and L-glutamate: step 1/2. This Pseudomonas fluorescens (strain ATCC BAA-477 / NRRL B-23932 / Pf-5) protein is Glutamate--cysteine ligase.